The primary structure comprises 187 residues: ATP synthase subunit b, chloroplastic (187 aa).

Residues 34 to 56 form a helical membrane-spanning segment; sequence LINLAAVIGLLFYSGRSFLTNLL.

This sequence belongs to the ATPase B chain family. As to quaternary structure, F-type ATPases have 2 components, F(1) - the catalytic core - and F(0) - the membrane proton channel. F(1) has five subunits: alpha(3), beta(3), gamma(1), delta(1), epsilon(1). F(0) has four main subunits: a(1), b(1), b'(1) and c(10-14). The alpha and beta chains form an alternating ring which encloses part of the gamma chain. F(1) is attached to F(0) by a central stalk formed by the gamma and epsilon chains, while a peripheral stalk is formed by the delta, b and b' chains.

It localises to the plastid. It is found in the chloroplast thylakoid membrane. In terms of biological role, f(1)F(0) ATP synthase produces ATP from ADP in the presence of a proton or sodium gradient. F-type ATPases consist of two structural domains, F(1) containing the extramembraneous catalytic core and F(0) containing the membrane proton channel, linked together by a central stalk and a peripheral stalk. During catalysis, ATP synthesis in the catalytic domain of F(1) is coupled via a rotary mechanism of the central stalk subunits to proton translocation. Its function is as follows. Component of the F(0) channel, it forms part of the peripheral stalk, linking F(1) to F(0). This Chlorokybus atmophyticus (Soil alga) protein is ATP synthase subunit b, chloroplastic.